The primary structure comprises 370 residues: GTPase Obg (370 aa).

The Obg domain maps to 1-159 (MKFIDEARIE…RMLRLELKVL (159 aa)). Residues 160–334 (ADVGLLGMPN…LCYAIYDYLA (175 aa)) form the OBG-type G domain. GTP-binding positions include 166-173 (GMPNAGKS), 191-195 (FTTLA), 213-216 (DIPG), 284-287 (NKLD), and 315-317 (SAL). Residues Ser173 and Thr193 each contribute to the Mg(2+) site. Residues 344-370 (EEEDLATDVRFRDAPPADGGATPGGDA) are disordered.

Belongs to the TRAFAC class OBG-HflX-like GTPase superfamily. OBG GTPase family. Monomer. Mg(2+) serves as cofactor.

It is found in the cytoplasm. In terms of biological role, an essential GTPase which binds GTP, GDP and possibly (p)ppGpp with moderate affinity, with high nucleotide exchange rates and a fairly low GTP hydrolysis rate. Plays a role in control of the cell cycle, stress response, ribosome biogenesis and in those bacteria that undergo differentiation, in morphogenesis control. This Burkholderia ambifaria (strain MC40-6) protein is GTPase Obg.